Consider the following 463-residue polypeptide: Asparagine--tRNA ligase (463 aa).

Belongs to the class-II aminoacyl-tRNA synthetase family. In terms of assembly, homodimer.

It is found in the cytoplasm. It carries out the reaction tRNA(Asn) + L-asparagine + ATP = L-asparaginyl-tRNA(Asn) + AMP + diphosphate + H(+). This chain is Asparagine--tRNA ligase, found in Alkaliphilus metalliredigens (strain QYMF).